Here is a 390-residue protein sequence, read N- to C-terminus: Phosphoglycerate kinase (390 aa).

Residues 21–23 (DLN), arginine 36, 59–62 (HLGR), arginine 114, and arginine 147 each bind substrate. ATP contacts are provided by residues lysine 198, glutamate 314, and 340 to 343 (GGDT).

The protein belongs to the phosphoglycerate kinase family. Monomer.

It is found in the cytoplasm. The enzyme catalyses (2R)-3-phosphoglycerate + ATP = (2R)-3-phospho-glyceroyl phosphate + ADP. It functions in the pathway carbohydrate degradation; glycolysis; pyruvate from D-glyceraldehyde 3-phosphate: step 2/5. The chain is Phosphoglycerate kinase from Buchnera aphidicola subsp. Acyrthosiphon pisum (strain 5A).